Here is a 473-residue protein sequence, read N- to C-terminus: Bifunctional protein GlmU (473 aa).

The interval 1–241 (MATQPTPLTA…VGSLVGINDR (241 aa)) is pyrophosphorylase. UDP-N-acetyl-alpha-D-glucosamine-binding positions include 13-16 (LAAG), K27, Q84, and 89-90 (GT). D114 is a Mg(2+) binding site. UDP-N-acetyl-alpha-D-glucosamine is bound by residues G152, E167, N182, and N239. N239 contributes to the Mg(2+) binding site. The tract at residues 242–262 (AQLAAAEEVLYGRIADRLRKS) is linker. Positions 263-473 (GVTIRTSARI…KARLKDAAKK (211 aa)) are N-acetyltransferase. UDP-N-acetyl-alpha-D-glucosamine contacts are provided by R343 and K361. H373 serves as the catalytic Proton acceptor. UDP-N-acetyl-alpha-D-glucosamine-binding residues include Y376 and N387. Residues A390, 396-397 (NY), S415, T433, and R450 each bind acetyl-CoA.

It in the N-terminal section; belongs to the N-acetylglucosamine-1-phosphate uridyltransferase family. The protein in the C-terminal section; belongs to the transferase hexapeptide repeat family. As to quaternary structure, homotrimer. Mg(2+) serves as cofactor.

The protein resides in the cytoplasm. The catalysed reaction is alpha-D-glucosamine 1-phosphate + acetyl-CoA = N-acetyl-alpha-D-glucosamine 1-phosphate + CoA + H(+). The enzyme catalyses N-acetyl-alpha-D-glucosamine 1-phosphate + UTP + H(+) = UDP-N-acetyl-alpha-D-glucosamine + diphosphate. It functions in the pathway nucleotide-sugar biosynthesis; UDP-N-acetyl-alpha-D-glucosamine biosynthesis; N-acetyl-alpha-D-glucosamine 1-phosphate from alpha-D-glucosamine 6-phosphate (route II): step 2/2. Its pathway is nucleotide-sugar biosynthesis; UDP-N-acetyl-alpha-D-glucosamine biosynthesis; UDP-N-acetyl-alpha-D-glucosamine from N-acetyl-alpha-D-glucosamine 1-phosphate: step 1/1. It participates in bacterial outer membrane biogenesis; LPS lipid A biosynthesis. Its function is as follows. Catalyzes the last two sequential reactions in the de novo biosynthetic pathway for UDP-N-acetylglucosamine (UDP-GlcNAc). The C-terminal domain catalyzes the transfer of acetyl group from acetyl coenzyme A to glucosamine-1-phosphate (GlcN-1-P) to produce N-acetylglucosamine-1-phosphate (GlcNAc-1-P), which is converted into UDP-GlcNAc by the transfer of uridine 5-monophosphate (from uridine 5-triphosphate), a reaction catalyzed by the N-terminal domain. The protein is Bifunctional protein GlmU of Sorangium cellulosum (strain So ce56) (Polyangium cellulosum (strain So ce56)).